The following is a 274-amino-acid chain: SPbeta prophage-derived UPF0714 protein YoqZ (274 aa).

The protein belongs to the UPF0714 family.

This is SPbeta prophage-derived UPF0714 protein YoqZ (yoqZ) from Bacillus subtilis (strain 168).